Here is a 677-residue protein sequence, read N- to C-terminus: Fermitin family homolog 1 (677 aa).

The FERM domain occupies 96–653; sequence MLRLRLPNLK…HEYIGGYIFL (558 aa). A phosphoserine mark is found at serine 170, serine 179, and serine 361. The PH domain maps to 337 to 433; that stretch reads ESEVDEIEAA…EVVPNVNVAE (97 aa).

This sequence belongs to the kindlin family. In terms of assembly, interacts with the cytoplasmic domain of integrins ITGB1 and ITGB3.

The protein resides in the cytoplasm. It is found in the cytoskeleton. Its subcellular location is the cell junction. The protein localises to the focal adhesion. It localises to the cell projection. The protein resides in the ruffle membrane. In terms of biological role, involved in cell adhesion. Contributes to integrin activation. When coexpressed with talin, potentiates activation of ITGA2B. Required for normal keratinocyte proliferation. Required for normal polarization of basal keratinocytes in skin, and for normal cell shape. Required for normal adhesion of keratinocytes to fibronectin and laminin, and for normal keratinocyte migration to wound sites. The sequence is that of Fermitin family homolog 1 (FERMT1) from Pongo abelii (Sumatran orangutan).